The primary structure comprises 246 residues: Phosphomannomutase (246 aa).

Catalysis depends on Asp-9, which acts as the Nucleophile. Mg(2+) is bound by residues Asp-9 and Asp-11. The active-site Proton donor/acceptor is the Asp-11. Arg-121, Arg-132, Arg-139, Ser-179, and Asp-181 together coordinate alpha-D-mannose 1-phosphate. Asp-207 is a binding site for Mg(2+).

This sequence belongs to the eukaryotic PMM family. In terms of assembly, homodimer.

The protein localises to the cytoplasm. The catalysed reaction is alpha-D-mannose 1-phosphate = D-mannose 6-phosphate. Its pathway is nucleotide-sugar biosynthesis; GDP-alpha-D-mannose biosynthesis; alpha-D-mannose 1-phosphate from D-fructose 6-phosphate: step 2/2. Functionally, involved in the synthesis of the GDP-mannose and dolichol-phosphate-mannose required for a number of critical mannosyl transfer reactions. The protein is Phosphomannomutase (PMM) of Babesia bovis.